A 456-amino-acid chain; its full sequence is MTLTALNAISPIDGRYVNKTRALSPYFSEFALTYYRLMVEIKWFESLAANDTIPEVPALDNKARKFLSDLISNFNESEAEKIKEFEKQTNHDVKAVEYYLQDKFQENEQLKSCVAFIHFACTSEDINNLAYALMIKQAIAQVIQPTIAEIMGSITLLGKQHADVAMLSRTHGQPATPTTMGKELVNFVARLKRPQQQLAEVLIPAKFNGAVGNYNAHVAAYPEVDWRKHCANFVTSLGLSFNAYTTQIEPHDGIAEVSQIMVRINNILLDYTQDIWSYISLGYFKQKTIAEEVGSSTMPHKVNPIDFENAEGNLGLSNALFIHFANKLTQSRMQRDLSDSTVLRNLGVAFSYSLIAYHSVAKGNDKLQINKSALQKDLSENWEVLAEAIQTVMRRYNEPNAYEQLKELTRGQMIDAENLKKFIKTLSIPEEAKAELMKLTPETYTGLATQLVKAFS.

N(6)-(1,2-dicarboxyethyl)-AMP is bound by residues 15–16 (RY), 90–92 (NHD), and 122–123 (TS). His-171 (proton donor/acceptor) is an active-site residue. Residue Gln-247 coordinates N(6)-(1,2-dicarboxyethyl)-AMP. Ser-295 serves as the catalytic Proton donor/acceptor. Residues Ser-296, 301-303 (KVN), Asn-309, Arg-335, and 340-344 (STVLR) each bind N(6)-(1,2-dicarboxyethyl)-AMP.

This sequence belongs to the lyase 1 family. Adenylosuccinate lyase subfamily. Homotetramer. Residues from neighboring subunits contribute catalytic and substrate-binding residues to each active site.

It catalyses the reaction N(6)-(1,2-dicarboxyethyl)-AMP = fumarate + AMP. The enzyme catalyses (2S)-2-[5-amino-1-(5-phospho-beta-D-ribosyl)imidazole-4-carboxamido]succinate = 5-amino-1-(5-phospho-beta-D-ribosyl)imidazole-4-carboxamide + fumarate. Its pathway is purine metabolism; AMP biosynthesis via de novo pathway; AMP from IMP: step 2/2. The protein operates within purine metabolism; IMP biosynthesis via de novo pathway; 5-amino-1-(5-phospho-D-ribosyl)imidazole-4-carboxamide from 5-amino-1-(5-phospho-D-ribosyl)imidazole-4-carboxylate: step 2/2. In terms of biological role, catalyzes two reactions in de novo purine nucleotide biosynthesis. Catalyzes the breakdown of 5-aminoimidazole- (N-succinylocarboxamide) ribotide (SAICAR or 2-[5-amino-1-(5-phospho-beta-D-ribosyl)imidazole-4-carboxamido]succinate) to 5-aminoimidazole-4-carboxamide ribotide (AICAR or 5-amino-1-(5-phospho-beta-D-ribosyl)imidazole-4-carboxamide) and fumarate, and of adenylosuccinate (ADS or N(6)-(1,2-dicarboxyethyl)-AMP) to adenosine monophosphate (AMP) and fumarate. The polypeptide is Adenylosuccinate lyase (purB) (Legionella pneumophila subsp. pneumophila (strain Philadelphia 1 / ATCC 33152 / DSM 7513)).